Reading from the N-terminus, the 282-residue chain is uncharacterized protein (282 aa).

This is an uncharacterized protein from Rickettsia conorii (strain ATCC VR-613 / Malish 7).